The following is a 413-amino-acid chain: Eukaryotic initiation factor 4A-10 (413 aa).

Residues 40-68 (DSFDAMGLQENLLRGIYAYGFEKPSAIQQ) carry the Q motif motif. The region spanning 71–241 (IVPFCKGLDV…RKFMNKPVRI (171 aa)) is the Helicase ATP-binding domain. An ATP-binding site is contributed by 84–91 (AQSGTGKT). Positions 189-192 (DEAD) match the DEAD box motif. Residues 252-413 (GIKQFYVNVD…ELPANVADLL (162 aa)) enclose the Helicase C-terminal domain.

This sequence belongs to the DEAD box helicase family. eIF4A subfamily. As to quaternary structure, eIF4F is a multi-subunit complex, the composition of which varies with external and internal environmental conditions. It is composed of at least EIF4A, EIF4E and EIF4G.

The catalysed reaction is ATP + H2O = ADP + phosphate + H(+). Its function is as follows. ATP-dependent RNA helicase which is a subunit of the eIF4F complex involved in cap recognition and is required for mRNA binding to ribosome. In the current model of translation initiation, eIF4A unwinds RNA secondary structures in the 5'-UTR of mRNAs which is necessary to allow efficient binding of the small ribosomal subunit, and subsequent scanning for the initiator codon. The chain is Eukaryotic initiation factor 4A-10 from Nicotiana tabacum (Common tobacco).